A 412-amino-acid chain; its full sequence is UDP-galactose transporter homolog 1 (412 aa).

The chain crosses the membrane as a helical span at residues 3 to 23; that stretch reads VLRLAVCISGVYAAFLLWAIA. The segment at 31 to 51 is disordered; that stretch reads FPSVHPHPHQQPHSPSDPPPG. The next 4 helical transmembrane spans lie at 58 to 78, 139 to 159, 197 to 217, and 222 to 242; these read LFLNFAQALASSLSALCYLSF, LLALLVQVSVFQTIASPIGFL, YIVVALVTVGISMFMLFAETS, and GGSDSMWGLVLLLVNLLIDGL. Asn244 carries an N-linked (GlcNAc...) asparagine glycan. Helical transmembrane passes span 262 to 282, 325 to 345, 355 to 375, and 379 to 399; these read MMFTMALTTQIILLPLLVLPL, SALAPLFAYALLGGLGQLFIF, TLVMVTVTRKLFTMLLSVVVF, and LTKGQWLGVGVVFAGIGVEAG.

This sequence belongs to the nucleotide-sugar transporter family. SLC35B subfamily.

It localises to the endoplasmic reticulum membrane. May be involved in specific transport of UDP-Gal from the cytosol to the Golgi lumen. Involved in the maintenance of optimal conditions for the folding of secretory pathway proteins in the endoplasmic reticulum. The polypeptide is UDP-galactose transporter homolog 1 (HUT1-A) (Cryptococcus neoformans var. neoformans serotype D (strain JEC21 / ATCC MYA-565) (Filobasidiella neoformans)).